The following is a 581-amino-acid chain: FAD-linked oxidoreductase easE (581 aa).

An N-terminal signal peptide occupies residues 1 to 25 (MYRLLGPLACLALAWFFTWAPSGRC). 2 N-linked (GlcNAc...) asparagine glycosylation sites follow: asparagine 44 and asparagine 73. Residues 122–306 (HQGRIPLYSA…AQATIRVFPD (185 aa)) form the FAD-binding PCMH-type domain. A glycan (N-linked (GlcNAc...) asparagine) is linked at asparagine 369.

This sequence belongs to the oxygen-dependent FAD-linked oxidoreductase family. It depends on FAD as a cofactor.

Its pathway is alkaloid biosynthesis; ergot alkaloid biosynthesis. Functionally, FAD-linked oxidoreductase; part of the gene cluster that mediates the biosynthesis of fungal ergot alkaloid. DmaW catalyzes the first step of ergot alkaloid biosynthesis by condensing dimethylallyl diphosphate (DMAP) and tryptophan to form 4-dimethylallyl-L-tryptophan. The second step is catalyzed by the methyltransferase easF that methylates 4-dimethylallyl-L-tryptophan in the presence of S-adenosyl-L-methionine, resulting in the formation of 4-dimethylallyl-L-abrine. The catalase easC and the FAD-dependent oxidoreductase easE then transform 4-dimethylallyl-L-abrine to chanoclavine-I which is further oxidized by easD in the presence of NAD(+), resulting in the formation of chanoclavine-I aldehyde. Agroclavine dehydrogenase easG then mediates the conversion of chanoclavine-I aldehyde to agroclavine via a non-enzymatic adduct reaction: the substrate is an iminium intermediate that is formed spontaneously from chanoclavine-I aldehyde in the presence of glutathione. Further conversion of agroclavine to paspalic acid is a two-step process involving oxidation of agroclavine to elymoclavine and of elymoclavine to paspalic acid, the second step being performed by the elymoclavine oxidase cloA. However, cloA does not encode a functional enzyme indicating that C.fusiformis terminates its ergot alkaloid pathway at elymoclavine. In Claviceps fusiformis (Ergot fungus), this protein is FAD-linked oxidoreductase easE.